We begin with the raw amino-acid sequence, 154 residues long: Myoglobin (154 aa).

The Globin domain occupies 2-148 (GLSDGEWQLV…FRNDMAAKYK (147 aa)). Serine 4 carries the post-translational modification Phosphoserine. Residue histidine 65 participates in nitrite binding. Histidine 65 is a binding site for O2. At threonine 68 the chain carries Phosphothreonine. Histidine 94 contributes to the heme b binding site.

The protein belongs to the globin family. Monomeric.

The protein resides in the cytoplasm. It is found in the sarcoplasm. It carries out the reaction Fe(III)-heme b-[protein] + nitric oxide + H2O = Fe(II)-heme b-[protein] + nitrite + 2 H(+). It catalyses the reaction H2O2 + AH2 = A + 2 H2O. In terms of biological role, monomeric heme protein which primary function is to store oxygen and facilitate its diffusion within muscle tissues. Reversibly binds oxygen through a pentacoordinated heme iron and enables its timely and efficient release as needed during periods of heightened demand. Depending on the oxidative conditions of tissues and cells, and in addition to its ability to bind oxygen, it also has a nitrite reductase activity whereby it regulates the production of bioactive nitric oxide. Under stress conditions, like hypoxia and anoxia, it also protects cells against reactive oxygen species thanks to its pseudoperoxidase activity. This Ornithorhynchus anatinus (Duckbill platypus) protein is Myoglobin (MB).